A 513-amino-acid polypeptide reads, in one-letter code: Glucose-1-phosphate adenylyltransferase small subunit, chloroplastic/amyloplastic (513 aa).

The transit peptide at 1 to 64 directs the protein to the chloroplast; sequence MAMAAAASPS…RRPFFFSPRA (64 aa).

This sequence belongs to the bacterial/plant glucose-1-phosphate adenylyltransferase family. In terms of assembly, heterotetramer. As to expression, leaves and starchy endosperm.

It is found in the plastid. The protein resides in the chloroplast. Its subcellular location is the amyloplast. It carries out the reaction alpha-D-glucose 1-phosphate + ATP + H(+) = ADP-alpha-D-glucose + diphosphate. It participates in glycan biosynthesis; starch biosynthesis. With respect to regulation, activated by 3'phosphoglycerate, inhibited by orthophosphate. Allosteric regulation. In terms of biological role, this protein plays a role in synthesis of starch. It catalyzes the synthesis of the activated glycosyl donor, ADP-glucose from Glc-1-P and ATP. This is Glucose-1-phosphate adenylyltransferase small subunit, chloroplastic/amyloplastic from Hordeum vulgare (Barley).